A 264-amino-acid polypeptide reads, in one-letter code: Thymidylate synthase (264 aa).

Residue Arg-21 participates in dUMP binding. His-51 serves as a coordination point for (6R)-5,10-methylene-5,6,7,8-tetrahydrofolate. 126-127 (RR) contacts dUMP. Cys-146 serves as the catalytic Nucleophile. Residues 166–169 (RSAD), Asn-177, and 207–209 (HLY) contribute to the dUMP site. Asp-169 contacts (6R)-5,10-methylene-5,6,7,8-tetrahydrofolate. Position 263 (Ser-263) interacts with (6R)-5,10-methylene-5,6,7,8-tetrahydrofolate.

This sequence belongs to the thymidylate synthase family. Bacterial-type ThyA subfamily. Homodimer.

It localises to the cytoplasm. The catalysed reaction is dUMP + (6R)-5,10-methylene-5,6,7,8-tetrahydrofolate = 7,8-dihydrofolate + dTMP. It participates in pyrimidine metabolism; dTTP biosynthesis. In terms of biological role, catalyzes the reductive methylation of 2'-deoxyuridine-5'-monophosphate (dUMP) to 2'-deoxythymidine-5'-monophosphate (dTMP) while utilizing 5,10-methylenetetrahydrofolate (mTHF) as the methyl donor and reductant in the reaction, yielding dihydrofolate (DHF) as a by-product. This enzymatic reaction provides an intracellular de novo source of dTMP, an essential precursor for DNA biosynthesis. This Neisseria meningitidis serogroup C / serotype 2a (strain ATCC 700532 / DSM 15464 / FAM18) protein is Thymidylate synthase.